A 143-amino-acid polypeptide reads, in one-letter code: MAKKIVGFIKLQIPAGKANPSPPVGPALGQRGLNIMEFCKAFNAQTQGMEPGLPVPVVITAYADKSFTFVMKTPPATVLIKKAAKVDKGSSKPHTDKVGKITRAQAEEIAKTKMPDLTAADLDAAVRTIAGSARSMGITVEGV.

The protein belongs to the universal ribosomal protein uL11 family. As to quaternary structure, part of the ribosomal stalk of the 50S ribosomal subunit. Interacts with L10 and the large rRNA to form the base of the stalk. L10 forms an elongated spine to which L12 dimers bind in a sequential fashion forming a multimeric L10(L12)X complex. One or more lysine residues are methylated.

Functionally, forms part of the ribosomal stalk which helps the ribosome interact with GTP-bound translation factors. This chain is Large ribosomal subunit protein uL11, found in Burkholderia mallei (strain NCTC 10247).